Consider the following 231-residue polypeptide: Protein crossbronx homolog (231 aa).

A UBC core domain is found at 14–168 (LQEYKILTEY…VEECVRLSQA (155 aa)).

The protein belongs to the ubiquitin-conjugating enzyme family. FTS subfamily.

This chain is Protein crossbronx homolog, found in Culex quinquefasciatus (Southern house mosquito).